The sequence spans 473 residues: Ras-GEF domain-containing family member 1B (473 aa).

The N-terminal Ras-GEF domain occupies H34 to L164. Residues N204 to G452 enclose the Ras-GEF domain.

Interacts with Ras family proteins. Interacts with CCDC124 during cytokinesis.

The protein localises to the early endosome. It is found in the late endosome. Its subcellular location is the midbody. In terms of biological role, guanine nucleotide exchange factor (GEF) with specificity for RAP2A, it doesn't seems to activate other Ras family proteins (in vitro). This Homo sapiens (Human) protein is Ras-GEF domain-containing family member 1B (RASGEF1B).